We begin with the raw amino-acid sequence, 483 residues long: ATP synthase subunit beta (483 aa).

An ATP-binding site is contributed by 169 to 176 (GGAGVGKT).

Belongs to the ATPase alpha/beta chains family. As to quaternary structure, F-type ATPases have 2 components, CF(1) - the catalytic core - and CF(0) - the membrane proton channel. CF(1) has five subunits: alpha(3), beta(3), gamma(1), delta(1), epsilon(1). CF(0) has three main subunits: a(1), b(2) and c(9-12). The alpha and beta chains form an alternating ring which encloses part of the gamma chain. CF(1) is attached to CF(0) by a central stalk formed by the gamma and epsilon chains, while a peripheral stalk is formed by the delta and b chains.

It is found in the cell membrane. It catalyses the reaction ATP + H2O + 4 H(+)(in) = ADP + phosphate + 5 H(+)(out). Produces ATP from ADP in the presence of a proton gradient across the membrane. The catalytic sites are hosted primarily by the beta subunits. The protein is ATP synthase subunit beta of Rhodococcus jostii (strain RHA1).